Consider the following 192-residue polypeptide: Putative cyclic ADP-D-ribose synthase ThsB1 (192 aa).

It belongs to the Thoeris B TIR-like family. Monomer; not seen to interact with ThsA.

The protein resides in the cytoplasm. Its activity is regulated as follows. Activated upon phage infection. Functionally, TIR-like domain-containing component of the Thoeris antiviral defense system, composed of ThsA and ThsB. Expression of ThsA and ThsB in B.subtilis (strain BEST7003) confers resistance to phages SBSphiC, SBSphiJ and SPO1. Phage infection activates this protein so that 30 to 45 minutes post-infection with phage SPO1 it generates a signal molecule that in turn activates the NAD(+) hydrolase activity of ThsA. The signal is similar to cyclic ADP-D-ribose, but how it differs is unknown. In vitro purified (but unactivated) ThsB has no NAD(+) hydrolyzing activity, no activity on AMP, CMP, GMP or UMP, does not alter the activity of ThsA, does not bind DNA. Hydrolyzes NAD(+) to make a cyclic ADP-D-ribose (cADPR) signaling molecule; might make 3'cADPR. This is Putative cyclic ADP-D-ribose synthase ThsB1 from Bacillus cereus (strain MSX-D12).